Here is a 465-residue protein sequence, read N- to C-terminus: Keratin, type I cytoskeletal 13 (465 aa).

Positions 1–28 (MNFTSFSITQGSRPQPPSTRGFSGNSFK) are enriched in polar residues. Positions 1-47 (MNFTSFSITQGSRPQPPSTRGFSGNSFKSDLIPQSRRSHSVYGTPGS) are disordered. The head stretch occupies residues 1–98 (MNFTSFSITQ…SGGSDLLLGT (98 aa)). Residues 99–135 (SGKEAMQNLNDRLASYLEKVRSLEERNRELEQKIREW) form a coil 1A region. The IF rod domain occupies 100 to 412 (GKEAMQNLND…ILLEGDEGKF (313 aa)). The tract at residues 136 to 154 (YEKQGAGTKTKDFSHYFKI) is linker 1. Residues 155 to 246 (IADLQKQIHD…KSHDEEMKAL (92 aa)) are coil 1B. Residues 247 to 269 (RSQLGGQVNVEVDAAPAEDLTKK) are linker 12. A coil 2 region spans residues 270–408 (LERMRQQYEQ…RTYRILLEGD (139 aa)). The interval 409–465 (EGKFQTSPHHPSIVTKQTETVVTPVVITNVKTVVEEIIDGKIVSKKEYPGPPEKLMI) is tail.

Belongs to the intermediate filament family. As to quaternary structure, heterotetramer of two type I and two type II keratins. Expressed in skin.

Functionally, type 1 keratin. May maintain oral mucosal cell homeostasis and tissue organization in response to mechanical stress. The sequence is that of Keratin, type I cytoskeletal 13 (KRT13) from Protopterus aethiopicus (Marbled lungfish).